The chain runs to 1383 residues: DNA-directed RNA polymerase subunit beta (1383 aa).

This sequence belongs to the RNA polymerase beta chain family. As to quaternary structure, the RNAP catalytic core consists of 2 alpha, 1 beta, 1 beta' and 1 omega subunit. When a sigma factor is associated with the core the holoenzyme is formed, which can initiate transcription.

The enzyme catalyses RNA(n) + a ribonucleoside 5'-triphosphate = RNA(n+1) + diphosphate. Functionally, DNA-dependent RNA polymerase catalyzes the transcription of DNA into RNA using the four ribonucleoside triphosphates as substrates. This is DNA-directed RNA polymerase subunit beta from Bartonella henselae (strain ATCC 49882 / DSM 28221 / CCUG 30454 / Houston 1) (Rochalimaea henselae).